We begin with the raw amino-acid sequence, 491 residues long: Argininosuccinate lyase (491 aa).

It belongs to the lyase 1 family. Argininosuccinate lyase subfamily.

Its subcellular location is the cytoplasm. The catalysed reaction is 2-(N(omega)-L-arginino)succinate = fumarate + L-arginine. It functions in the pathway amino-acid biosynthesis; L-arginine biosynthesis; L-arginine from L-ornithine and carbamoyl phosphate: step 3/3. In Methanosarcina acetivorans (strain ATCC 35395 / DSM 2834 / JCM 12185 / C2A), this protein is Argininosuccinate lyase.